A 226-amino-acid polypeptide reads, in one-letter code: Flagellar L-ring protein (226 aa).

Residues 1 to 15 (MRILGLSAALLILGG) form the signal peptide. Cys-16 carries N-palmitoyl cysteine lipidation. The S-diacylglycerol cysteine moiety is linked to residue Cys-16.

Belongs to the FlgH family. The basal body constitutes a major portion of the flagellar organelle and consists of four rings (L,P,S, and M) mounted on a central rod.

Its subcellular location is the cell outer membrane. It localises to the bacterial flagellum basal body. Its function is as follows. Assembles around the rod to form the L-ring and probably protects the motor/basal body from shearing forces during rotation. This chain is Flagellar L-ring protein, found in Alteromonas mediterranea (strain DSM 17117 / CIP 110805 / LMG 28347 / Deep ecotype).